Here is a 468-residue protein sequence, read N- to C-terminus: Putative magnesium transporter MRS2-G (468 aa).

Disordered regions lie at residues 1–76 (MGRR…AGKV) and 182–205 (NGQP…VPRL). 2 stretches are compositionally biased toward low complexity: residues 14 to 23 (ASNASTSSST) and 31 to 45 (RLPS…SSPS). The span at 46–67 (PASPSPPPPSASHPAPPSPPLA) shows a compositional bias: pro residues. Residues 187-197 (GDDHGEKHDDS) show a composition bias toward basic and acidic residues. A run of 2 helical transmembrane segments spans residues 402–422 (LTLT…GAFA) and 437–457 (FFWP…IVLL).

The protein belongs to the CorA metal ion transporter (MIT) (TC 1.A.35.5) family.

The protein localises to the membrane. Its function is as follows. Putative magnesium transporter. The sequence is that of Putative magnesium transporter MRS2-G (MRS2-G) from Oryza sativa subsp. indica (Rice).